The following is a 151-amino-acid chain: Small ribosomal subunit protein uS15 (151 aa).

This sequence belongs to the universal ribosomal protein uS15 family. Component of the small ribosomal subunit. Mature ribosomes consist of a small (40S) and a large (60S) subunit. The 40S subunit contains about 32 different proteins and 1 molecule of RNA (18S). The 60S subunit contains 45 different proteins and 3 molecules of RNA (25S, 5.8S and 5S).

The protein resides in the cytoplasm. Component of the ribosome, a large ribonucleoprotein complex responsible for the synthesis of proteins in the cell. The small ribosomal subunit (SSU) binds messenger RNAs (mRNAs) and translates the encoded message by selecting cognate aminoacyl-transfer RNA (tRNA) molecules. The large subunit (LSU) contains the ribosomal catalytic site termed the peptidyl transferase center (PTC), which catalyzes the formation of peptide bonds, thereby polymerizing the amino acids delivered by tRNAs into a polypeptide chain. The nascent polypeptides leave the ribosome through a tunnel in the LSU and interact with protein factors that function in enzymatic processing, targeting, and the membrane insertion of nascent chains at the exit of the ribosomal tunnel. This is Small ribosomal subunit protein uS15 (RPS13) from Candida albicans (strain SC5314 / ATCC MYA-2876) (Yeast).